We begin with the raw amino-acid sequence, 201 residues long: Retinol-binding protein 4 (201 aa).

A signal peptide spans 1-18 (MEWVWALVLLAALGSAQA). Disulfide bonds link Cys22/Cys178, Cys88/Cys192, and Cys138/Cys147. Substrate is bound at residue Gln116. Arg139 is subject to Omega-N-methylarginine.

It belongs to the calycin superfamily. Lipocalin family. In terms of assembly, interacts with TTR. Interaction with TTR prevents its loss by filtration through the kidney glomeruli. Interacts with STRA6.

It is found in the secreted. Its function is as follows. Retinol-binding protein that mediates retinol transport in blood plasma. Delivers retinol from the liver stores to the peripheral tissues. Transfers the bound all-trans retinol to STRA6, that then facilitates retinol transport across the cell membrane. The protein is Retinol-binding protein 4 (RBP4) of Sus scrofa (Pig).